We begin with the raw amino-acid sequence, 320 residues long: Malate dehydrogenase (320 aa).

NAD(+) contacts are provided by residues glycine 10–glycine 15 and aspartate 34. Substrate contacts are provided by arginine 83 and arginine 89. NAD(+) is bound by residues asparagine 96 and isoleucine 119–asparagine 121. Residues asparagine 121 and arginine 152 each coordinate substrate. Histidine 176 (proton acceptor) is an active-site residue.

This sequence belongs to the LDH/MDH superfamily. MDH type 3 family.

It catalyses the reaction (S)-malate + NAD(+) = oxaloacetate + NADH + H(+). In terms of biological role, catalyzes the reversible oxidation of malate to oxaloacetate. The protein is Malate dehydrogenase of Methylorubrum extorquens (strain CM4 / NCIMB 13688) (Methylobacterium extorquens).